Consider the following 107-residue polypeptide: Quaternary ammonium compound-resistance protein QacG (107 aa).

The next 4 membrane-spanning stretches (helical) occupy residues 1-21 (MHYLYLFISIATEIIGTSFLK), 26-46 (FTKLWPTLGTLLSFGICFYFL), 57-77 (ITYATWAGLGLVLTTIISVIV), and 84-104 (LISIISIGLIVIGVVLLNVFG).

The protein belongs to the drug/metabolite transporter (DMT) superfamily. Small multidrug resistance (SMR) (TC 2.A.7.1) family.

The protein resides in the cell membrane. In terms of biological role, multidrug exporter. Is implicated for the resistance to bacteriocidal quaternary ammonium compounds. The protein is Quaternary ammonium compound-resistance protein QacG (qacG) of Staphylococcus sp. (strain ST94).